Here is a 301-residue protein sequence, read N- to C-terminus: Possible hemolysin C (301 aa).

2 CBS domains span residues 79 to 141 (MVPR…NFRL) and 144 to 201 (LIRK…IDDE).

The protein belongs to the UPF0053 family. Hemolysin C subfamily.

The protein is Possible hemolysin C (tlyC) of Rickettsia bellii (strain RML369-C).